The primary structure comprises 227 residues: Urease accessory protein UreF (227 aa).

This sequence belongs to the UreF family. In terms of assembly, ureD, UreF and UreG form a complex that acts as a GTP-hydrolysis-dependent molecular chaperone, activating the urease apoprotein by helping to assemble the nickel containing metallocenter of UreC. The UreE protein probably delivers the nickel.

Its subcellular location is the cytoplasm. Required for maturation of urease via the functional incorporation of the urease nickel metallocenter. This chain is Urease accessory protein UreF, found in Actinobacillus pleuropneumoniae serotype 5b (strain L20).